Reading from the N-terminus, the 153-residue chain is Zinc finger protein GIS2 (153 aa).

CCHC-type zinc fingers lie at residues 4-21, 23-40, 47-64, 65-82, 92-109, 116-133, and 135-152; these read KACYVCGKIGHLAEDCDS, RLCYNCNKPGHVQTDCTM, KQCYNCGETGHVRSECTV, QRCFNCNQTGHISRECPE, VSCYKCGGPNHMAKDCMK, LKCYTCGQAGHMSRDCQN, and RLCYNCNETGHISKDCPK.

It localises to the cytoplasm. Functionally, may act in the sexual differentiation pathway. The protein is Zinc finger protein GIS2 (GIS2) of Saccharomyces cerevisiae (strain ATCC 204508 / S288c) (Baker's yeast).